Here is a 391-residue protein sequence, read N- to C-terminus: Isochorismate synthase EntC (391 aa).

Positions 140, 142, 145, and 146 each coordinate Mg(2+). K147 functions as the Proton acceptor in the catalytic mechanism. The Proton donor role is filled by E197. G214, S215, E241, A303, R347, and G361 together coordinate isochorismate. E241 contributes to the Mg(2+) binding site. Residue E376 participates in Mg(2+) binding. Isochorismate is bound at residue K380.

The protein belongs to the isochorismate synthase family. In terms of assembly, monomer. Forms a specific pairwise interaction with EntB; this interaction likely facilitates substrate channeling to connect the EntB and EntC active sites. The cofactor is Mg(2+).

It catalyses the reaction chorismate = isochorismate. It participates in siderophore biosynthesis; enterobactin biosynthesis. Functionally, involved in the biosynthesis of the siderophore enterobactin (macrocyclic trimeric lactone of N-(2,3-dihydroxybenzoyl)-serine). Catalyzes the reversible conversion of chorismate to isochorismate. This Escherichia coli O157:H7 protein is Isochorismate synthase EntC.